A 365-amino-acid chain; its full sequence is tRNA dimethylallyltransferase (365 aa).

Position 23–30 (23–30 (APTASGKT)) interacts with ATP. 25-30 (TASGKT) serves as a coordination point for substrate. Interaction with substrate tRNA stretches follow at residues 48-51 (DSAL), 172-176 (QRITR), and 256-261 (RCVGYR).

It belongs to the IPP transferase family. In terms of assembly, monomer. Mg(2+) is required as a cofactor.

The enzyme catalyses adenosine(37) in tRNA + dimethylallyl diphosphate = N(6)-dimethylallyladenosine(37) in tRNA + diphosphate. Catalyzes the transfer of a dimethylallyl group onto the adenine at position 37 in tRNAs that read codons beginning with uridine, leading to the formation of N6-(dimethylallyl)adenosine (i(6)A). This Psychrobacter sp. (strain PRwf-1) protein is tRNA dimethylallyltransferase.